A 632-amino-acid chain; its full sequence is 2-hydroxyacyl-CoA lyase 2 (632 aa).

A helical membrane pass occupies residues Phe13–Ala33. Glu98 serves as a coordination point for thiamine diphosphate. Ser369 carries the phosphoserine modification. The interval Asp470 to Gly550 is thiamine pyrophosphate binding. Positions 521 and 547 each coordinate Mg(2+).

The protein belongs to the TPP enzyme family. It depends on Mg(2+) as a cofactor. Requires thiamine diphosphate as cofactor.

It is found in the endoplasmic reticulum membrane. The catalysed reaction is 2-hydroxyoctadecanoyl-CoA = heptadecanal + formyl-CoA. The enzyme catalyses (2R)-hydroxyhexadecanoyl-CoA = pentadecanal + formyl-CoA. Endoplasmic reticulum 2-OH acyl-CoA lyase involved in the cleavage (C1 removal) reaction in the fatty acid alpha-oxydation in a thiamine pyrophosphate (TPP)-dependent manner. Involved in the phytosphingosine degradation pathway. The chain is 2-hydroxyacyl-CoA lyase 2 (Ilvbl) from Mus musculus (Mouse).